A 246-amino-acid polypeptide reads, in one-letter code: 3-deoxy-manno-octulosonate cytidylyltransferase (246 aa).

It belongs to the KdsB family.

Its subcellular location is the cytoplasm. The catalysed reaction is 3-deoxy-alpha-D-manno-oct-2-ulosonate + CTP = CMP-3-deoxy-beta-D-manno-octulosonate + diphosphate. It participates in nucleotide-sugar biosynthesis; CMP-3-deoxy-D-manno-octulosonate biosynthesis; CMP-3-deoxy-D-manno-octulosonate from 3-deoxy-D-manno-octulosonate and CTP: step 1/1. The protein operates within bacterial outer membrane biogenesis; lipopolysaccharide biosynthesis. In terms of biological role, activates KDO (a required 8-carbon sugar) for incorporation into bacterial lipopolysaccharide in Gram-negative bacteria. The chain is 3-deoxy-manno-octulosonate cytidylyltransferase from Paramagnetospirillum magneticum (strain ATCC 700264 / AMB-1) (Magnetospirillum magneticum).